The chain runs to 307 residues: Homoserine kinase (307 aa).

P86–A96 contacts ATP.

The protein belongs to the GHMP kinase family. Homoserine kinase subfamily.

It localises to the cytoplasm. It carries out the reaction L-homoserine + ATP = O-phospho-L-homoserine + ADP + H(+). It participates in amino-acid biosynthesis; L-threonine biosynthesis; L-threonine from L-aspartate: step 4/5. In terms of biological role, catalyzes the ATP-dependent phosphorylation of L-homoserine to L-homoserine phosphate. In Petrotoga mobilis (strain DSM 10674 / SJ95), this protein is Homoserine kinase.